Here is a 484-residue protein sequence, read N- to C-terminus: Cysteine--tRNA ligase (484 aa).

Cys-29 lines the Zn(2+) pocket. Positions 31-41 (PTVQSAPHIGH) match the 'HIGH' region motif. Residues Cys-219, His-244, and Glu-248 each coordinate Zn(2+). Residues 275 to 279 (KMSKS) carry the 'KMSKS' region motif. Residue Lys-278 coordinates ATP.

Belongs to the class-I aminoacyl-tRNA synthetase family. As to quaternary structure, monomer. Requires Zn(2+) as cofactor.

It is found in the cytoplasm. The catalysed reaction is tRNA(Cys) + L-cysteine + ATP = L-cysteinyl-tRNA(Cys) + AMP + diphosphate. The protein is Cysteine--tRNA ligase of Clavibacter michiganensis subsp. michiganensis (strain NCPPB 382).